We begin with the raw amino-acid sequence, 624 residues long: PTS system mannitol-specific EIICBA component (624 aa).

One can recognise a PTS EIIC type-2 domain in the interval 13 to 336; sequence FGRFLSNMVM…SFVIASFFLK (324 aa). A run of 6 helical transmembrane segments spans residues 25–46, 51–71, 135–156, 166–186, 274–293, and 314–335; these read IGAF…WLPN, KLVG…SGGK, SSGI…PAVK, VDIL…EPAK, VIAG…AGLV, and VGVL…SFFL. In terms of domain architecture, PTS EIIB type-2 spans 372–463; that stretch reads QKIFVACDAG…LVQDLSNTKV (92 aa). Cys378 (phosphocysteine intermediate; for EIIB activity) is an active-site residue. Cys378 carries the post-translational modification Phosphocysteine; by EIIA. The region spanning 482–624 is the PTS EIIA type-2 domain; it reads FVLTEKQVFL…VEKVLALLKA (143 aa). His542 acts as the Tele-phosphohistidine intermediate; for EIIA activity in catalysis. His542 is subject to Phosphohistidine; by HPr.

In terms of assembly, homodimer. Post-translationally, an intramolecular phosphotransfer takes places between His-542 and Cys-378.

The protein resides in the cell inner membrane. The catalysed reaction is D-mannitol(out) + N(pros)-phospho-L-histidyl-[protein] = D-mannitol 1-phosphate(in) + L-histidyl-[protein]. Its function is as follows. The phosphoenolpyruvate-dependent sugar phosphotransferase system (sugar PTS), a major carbohydrate active transport system, catalyzes the phosphorylation of incoming sugar substrates concomitantly with their translocation across the cell membrane. This system is involved in D-mannitol transport. The polypeptide is PTS system mannitol-specific EIICBA component (mtlA) (Pasteurella multocida (strain Pm70)).